Here is a 393-residue protein sequence, read N- to C-terminus: NAD(P)H-quinone oxidoreductase subunit H, chloroplastic (393 aa).

The protein belongs to the complex I 49 kDa subunit family. As to quaternary structure, NDH is composed of at least 16 different subunits, 5 of which are encoded in the nucleus.

The protein localises to the plastid. It localises to the chloroplast thylakoid membrane. The enzyme catalyses a plastoquinone + NADH + (n+1) H(+)(in) = a plastoquinol + NAD(+) + n H(+)(out). It carries out the reaction a plastoquinone + NADPH + (n+1) H(+)(in) = a plastoquinol + NADP(+) + n H(+)(out). Its function is as follows. NDH shuttles electrons from NAD(P)H:plastoquinone, via FMN and iron-sulfur (Fe-S) centers, to quinones in the photosynthetic chain and possibly in a chloroplast respiratory chain. The immediate electron acceptor for the enzyme in this species is believed to be plastoquinone. Couples the redox reaction to proton translocation, and thus conserves the redox energy in a proton gradient. In Lobularia maritima (Sweet alyssum), this protein is NAD(P)H-quinone oxidoreductase subunit H, chloroplastic.